A 146-amino-acid chain; its full sequence is 3-dehydroquinate dehydratase (146 aa).

Residue Tyr-24 is the Proton acceptor of the active site. Substrate contacts are provided by Asn-73, His-79, and Asp-86. His-99 serves as the catalytic Proton donor. Residues 100 to 101 (LS) and Arg-110 contribute to the substrate site.

This sequence belongs to the type-II 3-dehydroquinase family. In terms of assembly, homododecamer.

It catalyses the reaction 3-dehydroquinate = 3-dehydroshikimate + H2O. The protein operates within metabolic intermediate biosynthesis; chorismate biosynthesis; chorismate from D-erythrose 4-phosphate and phosphoenolpyruvate: step 3/7. Its function is as follows. Catalyzes a trans-dehydration via an enolate intermediate. This is 3-dehydroquinate dehydratase from Shewanella baltica (strain OS223).